The primary structure comprises 452 residues: Exodeoxyribonuclease 7 large subunit (452 aa).

It belongs to the XseA family. In terms of assembly, heterooligomer composed of large and small subunits.

Its subcellular location is the cytoplasm. It carries out the reaction Exonucleolytic cleavage in either 5'- to 3'- or 3'- to 5'-direction to yield nucleoside 5'-phosphates.. Functionally, bidirectionally degrades single-stranded DNA into large acid-insoluble oligonucleotides, which are then degraded further into small acid-soluble oligonucleotides. This Bacillus thuringiensis (strain Al Hakam) protein is Exodeoxyribonuclease 7 large subunit.